We begin with the raw amino-acid sequence, 182 residues long: Adenine phosphoribosyltransferase (182 aa).

The protein belongs to the purine/pyrimidine phosphoribosyltransferase family. As to quaternary structure, homodimer.

It is found in the cytoplasm. The catalysed reaction is AMP + diphosphate = 5-phospho-alpha-D-ribose 1-diphosphate + adenine. The protein operates within purine metabolism; AMP biosynthesis via salvage pathway; AMP from adenine: step 1/1. Functionally, catalyzes a salvage reaction resulting in the formation of AMP, that is energically less costly than de novo synthesis. The polypeptide is Adenine phosphoribosyltransferase (Campylobacter fetus subsp. fetus (strain 82-40)).